We begin with the raw amino-acid sequence, 275 residues long: Uronate dehydrogenase (275 aa).

Residues 22–23, 42–44, 60–61, and 80–84 each bind NAD(+); these read GL, DIA, DL, and FGGVS. Substrate contacts are provided by residues Ser84 and 120–122; that span reads SNH. Tyr145 serves as the catalytic Proton acceptor. Lys149 contributes to the NAD(+) binding site. Ser174 is a binding site for substrate. Ser175 is a binding site for NAD(+). Arg183 contacts substrate.

Belongs to the NAD(P)-dependent epimerase/dehydratase family. As to quaternary structure, homohexamer.

It carries out the reaction beta-D-galacturonate + NAD(+) = D-galactaro-1,5-lactone + NADH + H(+). The enzyme catalyses beta-D-glucuronate + NAD(+) = D-glucaro-1,5-lactone + NADH + H(+). It participates in carbohydrate acid metabolism; D-galacturonate degradation via prokaryotic oxidative pathway. Catalyzes the oxidation of beta-D-galacturonate and beta-D-glucuronate to galactarate and D-glucarate, respectively. Cannot use NADP(+) instead of NAD(+) as cosubstrate. In Pseudomonas syringae pv. tomato (strain ATCC BAA-871 / DC3000), this protein is Uronate dehydrogenase (udh).